Reading from the N-terminus, the 130-residue chain is Small ribosomal subunit protein uS11c (130 aa).

The protein belongs to the universal ribosomal protein uS11 family. As to quaternary structure, part of the 30S ribosomal subunit.

It localises to the plastid. The protein resides in the chloroplast. The protein is Small ribosomal subunit protein uS11c of Drimys granadensis.